Reading from the N-terminus, the 522-residue chain is Ribonuclease Y (522 aa).

Residues 3 to 23 traverse the membrane as a helical segment; it reads ELIMYILATAVVSIGVGIVAG. In terms of domain architecture, KH spans 212 to 272; sequence CVSIFNIESD…VRREVARLSL (61 aa). In terms of domain architecture, HD spans 338-431; the sequence is LLQHSREVAK…VQVCDAISGA (94 aa).

Belongs to the RNase Y family.

The protein resides in the cell membrane. Functionally, endoribonuclease that initiates mRNA decay. The sequence is that of Ribonuclease Y from Cytophaga hutchinsonii (strain ATCC 33406 / DSM 1761 / CIP 103989 / NBRC 15051 / NCIMB 9469 / D465).